The chain runs to 341 residues: uncharacterized protein (341 aa).

Catalysis depends on residues Ser-111, Asp-247, and His-275.

It belongs to the DmpD/TodF/XylF esterase family.

This is an uncharacterized protein from Mycobacterium bovis (strain ATCC BAA-935 / AF2122/97).